Here is a 1146-residue protein sequence, read N- to C-terminus: Lysine-specific demethylase 2A (1146 aa).

One can recognise a JmjC domain in the interval 146–314 (FSHTKLENLV…MQLRIYSIED (169 aa)). Residue Thr-207 coordinates substrate. Fe cation-binding residues include His-210 and Asp-212. Lys-227 contributes to the substrate binding site. His-282 serves as a coordination point for Fe cation. Disordered regions lie at residues 363-467 (LNGR…PDSP) and 554-585 (TKPH…SSGA). Positions 373 to 387 (SSSSSSSSSGLSSSS) are enriched in low complexity. Positions 388–401 (DNDDSSDQDWEEEE) are enriched in acidic residues. The segment covering 402-442 (GLRKRERDRCRVERELQRKRNRDRQQRDQERDRHGRTERII) has biased composition (basic and acidic residues). Over residues 453-467 (LTPPPSLPLPTPDSP) the composition is skewed to pro residues. Residues 566–584 (STAPPRTSGTPSGTTASSG) are compositionally biased toward low complexity. The segment at 585–631 (ARRRRVRCRKCQACVQRECGTCHYCKDMKKFGGPGRMKQSCVLRQCL) adopts a CXXC-type zinc-finger fold. Zn(2+) is bound by residues Cys-592, Cys-595, Cys-598, Cys-603, Cys-606, Cys-609, Cys-625, and Cys-630. Residues 638-699 (SVTCALCGEV…YWECPKCYEG (62 aa)) form a PHD-type zinc finger. Disordered regions lie at residues 733 to 800 (VLRP…EGDR) and 832 to 867 (TPNP…ENVM). Residues 739-762 (GQSPPSPPLLLLPPSPSSAPPTPP) show a composition bias toward pro residues. The segment covering 772–789 (SREERAKRRQLAREKENH) has biased composition (basic and acidic residues). Residues 849-864 (EREEEEEEEEEEEETE) show a composition bias toward acidic residues. One can recognise an F-box domain in the interval 874-919 (STSMQKDVWLSVFHYLTHEELCICMRVCKAWYKWGCDKRLWSRIDV). LRR repeat units follow at residues 945-966 (WTNV…LKDL), 968-994 (LAGC…DLRW), 1032-1057 (GLDI…DLSH), 1058-1087 (CPLL…HLAG), 1088-1112 (CKGV…DLHG), and 1113-1138 (CKQV…CLSD).

It belongs to the JHDM1 histone demethylase family. Requires Fe(2+) as cofactor.

Its subcellular location is the nucleus. It is found in the nucleoplasm. It carries out the reaction N(6),N(6)-dimethyl-L-lysyl(36)-[histone H3] + 2 2-oxoglutarate + 2 O2 = L-lysyl(36)-[histone H3] + 2 formaldehyde + 2 succinate + 2 CO2. Functionally, histone demethylase that specifically demethylates 'Lys-36' of histone H3, thereby playing a central role in histone code. Preferentially demethylates dimethylated H3 'Lys-36' residue while it has weak or no activity for mono- and tri-methylated H3 'Lys-36'. May also recognize and bind to some phosphorylated proteins and promote their ubiquitination and degradation. Required to maintain the heterochromatic state. Associates with centromeres and represses transcription of small non-coding RNAs that are encoded by the clusters of satellite repeats at the centromere. Required to sustain centromeric integrity and genomic stability, particularly during mitosis. May play a role in the regulation of circadian gene expression. This Xenopus tropicalis (Western clawed frog) protein is Lysine-specific demethylase 2A (kdm2a).